The sequence spans 496 residues: Probable glycine dehydrogenase (decarboxylating) subunit 2 (496 aa).

At lysine 265 the chain carries N6-(pyridoxal phosphate)lysine.

This sequence belongs to the GcvP family. C-terminal subunit subfamily. The glycine cleavage system is composed of four proteins: P, T, L and H. In this organism, the P 'protein' is a heterodimer of two subunits. Pyridoxal 5'-phosphate is required as a cofactor.

The enzyme catalyses N(6)-[(R)-lipoyl]-L-lysyl-[glycine-cleavage complex H protein] + glycine + H(+) = N(6)-[(R)-S(8)-aminomethyldihydrolipoyl]-L-lysyl-[glycine-cleavage complex H protein] + CO2. Its function is as follows. The glycine cleavage system catalyzes the degradation of glycine. The P protein binds the alpha-amino group of glycine through its pyridoxal phosphate cofactor; CO(2) is released and the remaining methylamine moiety is then transferred to the lipoamide cofactor of the H protein. In Thioalkalivibrio sulfidiphilus (strain HL-EbGR7), this protein is Probable glycine dehydrogenase (decarboxylating) subunit 2.